We begin with the raw amino-acid sequence, 206 residues long: NADH-quinone oxidoreductase subunit C (206 aa).

The protein belongs to the complex I 30 kDa subunit family. As to quaternary structure, NDH-1 is composed of 14 different subunits. Subunits NuoB, C, D, E, F, and G constitute the peripheral sector of the complex.

It is found in the cell inner membrane. The catalysed reaction is a quinone + NADH + 5 H(+)(in) = a quinol + NAD(+) + 4 H(+)(out). In terms of biological role, NDH-1 shuttles electrons from NADH, via FMN and iron-sulfur (Fe-S) centers, to quinones in the respiratory chain. The immediate electron acceptor for the enzyme in this species is believed to be ubiquinone. Couples the redox reaction to proton translocation (for every two electrons transferred, four hydrogen ions are translocated across the cytoplasmic membrane), and thus conserves the redox energy in a proton gradient. The sequence is that of NADH-quinone oxidoreductase subunit C from Nitrosomonas europaea (strain ATCC 19718 / CIP 103999 / KCTC 2705 / NBRC 14298).